Here is a 244-residue protein sequence, read N- to C-terminus: 7-cyano-7-deazaguanine synthase (244 aa).

Phe-14–Val-24 provides a ligand contact to ATP. Residues Cys-202, Cys-217, Cys-220, and Cys-223 each contribute to the Zn(2+) site.

The protein belongs to the QueC family. The cofactor is Zn(2+).

The catalysed reaction is 7-carboxy-7-deazaguanine + NH4(+) + ATP = 7-cyano-7-deazaguanine + ADP + phosphate + H2O + H(+). It participates in purine metabolism; 7-cyano-7-deazaguanine biosynthesis. Catalyzes the ATP-dependent conversion of 7-carboxy-7-deazaguanine (CDG) to 7-cyano-7-deazaguanine (preQ(0)). The sequence is that of 7-cyano-7-deazaguanine synthase from Burkholderia vietnamiensis (strain G4 / LMG 22486) (Burkholderia cepacia (strain R1808)).